We begin with the raw amino-acid sequence, 297 residues long: MDIIGQVYCFTGAPHTITCLLREQFINWYIKYKRSENYPAFRELVVMYRLFLALGFLTFINAAGQRCRFTDVERDKGYTGMLLKGRLRKTAGNGRTVELICGRGNHNYTCESGVLKESSPRQARCGCKGILEMLFDMPKEERPSPMYDSVTYDPTPNTPTTVGKDGIWNGVDYRNGSTVKPYCDTGPVINGSSKAVCVSGKWVPTLGVCPKMCSIGSLKENGKFVDVTATTKGDELNPPPREQTLIPIVRKVDKDKVQHGVKVVALCKAEDSTTAAEGVQEFECDNGKWKPEPVPCP.

3 N-linked (GlcNAc...) asparagine glycosylation sites follow: Asn107, Asn175, and Asn190. The Sushi domain occupies 151–211; that stretch reads TYDPTPNTPT…WVPTLGVCPK (61 aa). The cysteines at positions 183 and 209 are disulfide-linked.

As to quaternary structure, interacts with mouse IL33 (in reduced form).

The protein localises to the secreted. Its subcellular location is the host nucleus. Secreted protein which suppresses the host allergic response by inhibiting the interaction of host IL33 with its receptor in order to maintain parasitic infection. Binds to both host IL33 and host nuclear DNA and this dual binding blocks the interaction of IL33 with its receptor, and tethers IL33 within necrotic cells, preventing its release, and blocking allergic response initiation. The chain is Alarmin release inhibitor from Heligmosomoides polygyrus (Parasitic roundworm).